The primary structure comprises 250 residues: UPF0736 protein BLi01230/BL03322 (250 aa).

It belongs to the UPF0736 family.

This chain is UPF0736 protein BLi01230/BL03322, found in Bacillus licheniformis (strain ATCC 14580 / DSM 13 / JCM 2505 / CCUG 7422 / NBRC 12200 / NCIMB 9375 / NCTC 10341 / NRRL NRS-1264 / Gibson 46).